Reading from the N-terminus, the 219-residue chain is Probable glutathione S-transferase GSTF1 (219 aa).

Positions 2-83 (TPVKVFGPAQ…YILRKYKTRE (82 aa)) constitute a GST N-terminal domain. Residues serine 12, 41–42 (HK), 54–55 (QI), and 67–68 (ES) contribute to the glutathione site. In terms of domain architecture, GST C-terminal spans 91 to 219 (NLREAAMVDV…LAAVMAPQGA (129 aa)).

It belongs to the GST superfamily. Phi family. Constitutively expressed in roots.

The enzyme catalyses RX + glutathione = an S-substituted glutathione + a halide anion + H(+). Functionally, conjugation of reduced glutathione to a wide number of exogenous and endogenous hydrophobic electrophiles. The sequence is that of Probable glutathione S-transferase GSTF1 (GSTF1) from Oryza sativa subsp. japonica (Rice).